A 206-amino-acid polypeptide reads, in one-letter code: Guanylate kinase (206 aa).

In terms of domain architecture, Guanylate kinase-like spans 5–183; it reads GNLFVVAAPS…AVFDLKTIVH (179 aa). ATP is bound at residue 12–19; that stretch reads APSGAGKS.

The protein belongs to the guanylate kinase family.

The protein resides in the cytoplasm. It catalyses the reaction GMP + ATP = GDP + ADP. In terms of biological role, essential for recycling GMP and indirectly, cGMP. This is Guanylate kinase from Polaromonas sp. (strain JS666 / ATCC BAA-500).